Consider the following 247-residue polypeptide: Enolase-phosphatase E1 (247 aa).

This sequence belongs to the HAD-like hydrolase superfamily. MasA/MtnC family. Monomer. Mg(2+) serves as cofactor.

It catalyses the reaction 5-methylsulfanyl-2,3-dioxopentyl phosphate + H2O = 1,2-dihydroxy-5-(methylsulfanyl)pent-1-en-3-one + phosphate. The protein operates within amino-acid biosynthesis; L-methionine biosynthesis via salvage pathway; L-methionine from S-methyl-5-thio-alpha-D-ribose 1-phosphate: step 3/6. It functions in the pathway amino-acid biosynthesis; L-methionine biosynthesis via salvage pathway; L-methionine from S-methyl-5-thio-alpha-D-ribose 1-phosphate: step 4/6. Functionally, bifunctional enzyme that catalyzes the enolization of 2,3-diketo-5-methylthiopentyl-1-phosphate (DK-MTP-1-P) into the intermediate 2-hydroxy-3-keto-5-methylthiopentenyl-1-phosphate (HK-MTPenyl-1-P), which is then dephosphorylated to form the acireductone 1,2-dihydroxy-3-keto-5-methylthiopentene (DHK-MTPene). This chain is Enolase-phosphatase E1, found in Leptospira biflexa serovar Patoc (strain Patoc 1 / Ames).